Consider the following 293-residue polypeptide: Acetylglutamate kinase (293 aa).

Residues 68-69 (GG), Arg-90, and Asn-189 each bind substrate.

This sequence belongs to the acetylglutamate kinase family. ArgB subfamily.

It localises to the cytoplasm. It carries out the reaction N-acetyl-L-glutamate + ATP = N-acetyl-L-glutamyl 5-phosphate + ADP. It participates in amino-acid biosynthesis; L-arginine biosynthesis; N(2)-acetyl-L-ornithine from L-glutamate: step 2/4. Catalyzes the ATP-dependent phosphorylation of N-acetyl-L-glutamate. The sequence is that of Acetylglutamate kinase from Mycobacterium marinum (strain ATCC BAA-535 / M).